The following is a 327-amino-acid chain: Flap endonuclease 1 (327 aa).

Positions 1-100 are N-domain; it reads MGNADLRQLA…DEIADRREQR (100 aa). Mg(2+)-binding residues include D28, D82, E154, E156, D176, D178, and D226. Positions 118-247 are I-domain; the sequence is EAARLDARTQ…TALDAIGEHG (130 aa). Residues 319–327 are interaction with PCNA; that stretch reads AQTGLDRWT.

It belongs to the XPG/RAD2 endonuclease family. FEN1 subfamily. As to quaternary structure, interacts with PCNA. PCNA stimulates the nuclease activity without altering cleavage specificity. The cofactor is Mg(2+).

Functionally, structure-specific nuclease with 5'-flap endonuclease and 5'-3' exonuclease activities involved in DNA replication and repair. During DNA replication, cleaves the 5'-overhanging flap structure that is generated by displacement synthesis when DNA polymerase encounters the 5'-end of a downstream Okazaki fragment. Binds the unpaired 3'-DNA end and kinks the DNA to facilitate 5' cleavage specificity. Cleaves one nucleotide into the double-stranded DNA from the junction in flap DNA, leaving a nick for ligation. Also involved in the base excision repair (BER) pathway. Acts as a genome stabilization factor that prevents flaps from equilibrating into structures that lead to duplications and deletions. Also possesses 5'-3' exonuclease activity on nicked or gapped double-stranded DNA. This chain is Flap endonuclease 1, found in Halobacterium salinarum (strain ATCC 29341 / DSM 671 / R1).